The sequence spans 202 residues: Methylthioribulose-1-phosphate dehydratase (202 aa).

Zn(2+) contacts are provided by H93 and H95.

This sequence belongs to the aldolase class II family. MtnB subfamily. Zn(2+) serves as cofactor.

The enzyme catalyses 5-(methylsulfanyl)-D-ribulose 1-phosphate = 5-methylsulfanyl-2,3-dioxopentyl phosphate + H2O. The protein operates within amino-acid biosynthesis; L-methionine biosynthesis via salvage pathway; L-methionine from S-methyl-5-thio-alpha-D-ribose 1-phosphate: step 2/6. In terms of biological role, catalyzes the dehydration of methylthioribulose-1-phosphate (MTRu-1-P) into 2,3-diketo-5-methylthiopentyl-1-phosphate (DK-MTP-1-P). The sequence is that of Methylthioribulose-1-phosphate dehydratase from Klebsiella pneumoniae subsp. pneumoniae (strain ATCC 700721 / MGH 78578).